We begin with the raw amino-acid sequence, 453 residues long: Pre-mRNA-splicing factor prp46 (453 aa).

A compositionally biased stretch (low complexity) spans 62 to 71 (EKQAKAAAAG). The tract at residues 62-129 (EKQAKAAAAG…PSATRQQRPD (68 aa)) is disordered. 7 WD repeats span residues 142–181 (GHLGWVRSLAVEPNNEWFASGAGDRTIKIWNLATGALRLT), 184–223 (GHISTVRGLAVSPRHPYLFSCGEDKMVKCWDLETNKVIRH), 226–265 (GHLSGVYTLALHPRLDLLVTGGRDGVARVWDMRTRSNIHV), 268–309 (GHKG…GVLT), 311–350 (HKKGVRNLAIHPREFTFASASTGSIKQWKCPEGDFMQNFE), 351–389 (GHNAVINSLAVNEDNVLFSGGDNGSMCFWDWKTGYKFQS), and 400–439 (DAEAGIMSATFDRTGLRLITGEADKTIKVWKPDDEATPES). Residues 432–453 (DDEATPESHPVTWAPTLGRQRY) are disordered.

Belongs to the WD repeat PRL1/PRL2 family. In terms of assembly, associated with the spliceosome.

The protein localises to the cytoplasm. The protein resides in the nucleus. In terms of biological role, involved in pre-mRNA splicing and required for cell cycle progression at G2/M. The chain is Pre-mRNA-splicing factor prp46 (prp46) from Aspergillus fumigatus (strain ATCC MYA-4609 / CBS 101355 / FGSC A1100 / Af293) (Neosartorya fumigata).